The following is a 319-amino-acid chain: Ribonuclease Z (319 aa).

Zn(2+) contacts are provided by H62, H64, D66, H67, H145, D216, and H274. D66 (proton acceptor) is an active-site residue.

This sequence belongs to the RNase Z family. In terms of assembly, homodimer. Requires Zn(2+) as cofactor.

The catalysed reaction is Endonucleolytic cleavage of RNA, removing extra 3' nucleotides from tRNA precursor, generating 3' termini of tRNAs. A 3'-hydroxy group is left at the tRNA terminus and a 5'-phosphoryl group is left at the trailer molecule.. Zinc phosphodiesterase, which displays some tRNA 3'-processing endonuclease activity. Probably involved in tRNA maturation, by removing a 3'-trailer from precursor tRNA. The polypeptide is Ribonuclease Z (Parasynechococcus marenigrum (strain WH8102)).